Reading from the N-terminus, the 439-residue chain is D-erythronate kinase (439 aa).

ATP contacts are provided by residues Ser-253, 366 to 369 (GGDV), and Gly-412.

The protein belongs to the four-carbon acid sugar kinase family.

The catalysed reaction is D-erythronate + ATP = 4-phospho-D-erythronate + ADP + H(+). Functionally, catalyzes the ATP-dependent phosphorylation of D-erythronate to D-erythronate 4-phosphate. Can also phosphorylate D-threonate and 4-hydroxy-L-threonine, with lower efficiency. This is D-erythronate kinase from Heliobacterium modesticaldum (strain ATCC 51547 / Ice1).